The sequence spans 132 residues: Large ribosomal subunit protein uL22 (132 aa).

Belongs to the universal ribosomal protein uL22 family. In terms of assembly, part of the 50S ribosomal subunit.

In terms of biological role, this protein binds specifically to 23S rRNA; its binding is stimulated by other ribosomal proteins, e.g. L4, L17, and L20. It is important during the early stages of 50S assembly. It makes multiple contacts with different domains of the 23S rRNA in the assembled 50S subunit and ribosome. Functionally, the globular domain of the protein is located near the polypeptide exit tunnel on the outside of the subunit, while an extended beta-hairpin is found that lines the wall of the exit tunnel in the center of the 70S ribosome. This chain is Large ribosomal subunit protein uL22, found in Pelagibacter ubique (strain HTCC1062).